Consider the following 670-residue polypeptide: DNA ligase (670 aa).

NAD(+) contacts are provided by residues 32-36, 81-82, and glutamate 110; these read DAEYD and SL. The active-site N6-AMP-lysine intermediate is lysine 112. Residues arginine 133, glutamate 170, lysine 289, and lysine 313 each contribute to the NAD(+) site. 4 residues coordinate Zn(2+): cysteine 407, cysteine 410, cysteine 425, and cysteine 431. In terms of domain architecture, BRCT spans 590-670; it reads ESQLSLKGQT…ALMDLLNAAN (81 aa).

The protein belongs to the NAD-dependent DNA ligase family. LigA subfamily. Mg(2+) is required as a cofactor. Requires Mn(2+) as cofactor.

The enzyme catalyses NAD(+) + (deoxyribonucleotide)n-3'-hydroxyl + 5'-phospho-(deoxyribonucleotide)m = (deoxyribonucleotide)n+m + AMP + beta-nicotinamide D-nucleotide.. Its function is as follows. DNA ligase that catalyzes the formation of phosphodiester linkages between 5'-phosphoryl and 3'-hydroxyl groups in double-stranded DNA using NAD as a coenzyme and as the energy source for the reaction. It is essential for DNA replication and repair of damaged DNA. In Shewanella frigidimarina (strain NCIMB 400), this protein is DNA ligase.